Here is a 467-residue protein sequence, read N- to C-terminus: Probable circularly permuted 1,3-beta-glucanase TOS1 (467 aa).

A signal peptide spans 1 to 21; the sequence is MKFSSTTLLAGLSSLTATVSA. A compositionally biased stretch (low complexity) spans 158 to 172; that stretch reads PAVSSAAADDNANSG. Disordered stretches follow at residues 158–187 and 200–223; these read PAVS…GYGS and SDIS…TASV. Residues 173–185 show a composition bias toward gly residues; it reads SGSGSSAGSGSGY. The span at 203 to 222 shows a compositional bias: low complexity; that stretch reads STKSAPTSTSAQPSSSETAS. Residues 374–379 carry the ExDxxE motif motif; sequence ELDLFE. The segment at 391–413 is disordered; it reads HLHDGQGSSQNSNNGGGGSQDYF.

Belongs to the PGA52 family. Post-translationally, cleaved by KEX2 in vitro.

Its subcellular location is the secreted. It carries out the reaction Hydrolysis of (1-&gt;3)-beta-D-glucosidic linkages in (1-&gt;3)-beta-D-glucans.. In terms of biological role, probable circularly permuted 1,3-beta-glucanase involved in cell wall modification through beta-1,3-glucan network alterations such as increased branching or remodeling. Plays a role in engulfment by host macrophages. This Candida albicans (strain SC5314 / ATCC MYA-2876) (Yeast) protein is Probable circularly permuted 1,3-beta-glucanase TOS1.